The sequence spans 194 residues: dTTP/UTP pyrophosphatase (194 aa).

Aspartate 76 acts as the Proton acceptor in catalysis.

It belongs to the Maf family. YhdE subfamily. The cofactor is a divalent metal cation.

Its subcellular location is the cytoplasm. It carries out the reaction dTTP + H2O = dTMP + diphosphate + H(+). The enzyme catalyses UTP + H2O = UMP + diphosphate + H(+). In terms of biological role, nucleoside triphosphate pyrophosphatase that hydrolyzes dTTP and UTP. May have a dual role in cell division arrest and in preventing the incorporation of modified nucleotides into cellular nucleic acids. In Shewanella sp. (strain MR-7), this protein is dTTP/UTP pyrophosphatase.